The chain runs to 375 residues: Secreted LysM effector Vd4LysM (375 aa).

A signal peptide spans Met-1–Ala-24. Positions Ser-57 to Val-104 constitute a LysM 1 domain. The segment at Gly-108–Ile-139 is disordered. Residues Thr-116–Pro-129 show a composition bias toward low complexity. The LysM 2 domain occupies Lys-149–Val-195. Over residues Thr-206–Pro-217 the composition is skewed to low complexity. The tract at residues Thr-206 to Gln-225 is disordered. The LysM 3 domain maps to Lys-237–Val-283. The segment at Gly-287 to Gln-317 is disordered. Low complexity predominate over residues Thr-296–Gln-317. A LysM 4 domain is found at Lys-326–Val-372.

This sequence belongs to the secreted LysM effector family.

Might have a role in sequestration of chitin oligosaccharides (breakdown products of fungal cell walls that are released during invasion and act as triggers of host immunity) to dampen host defense. Does not play an important role during host colonization. The polypeptide is Secreted LysM effector Vd4LysM (Verticillium dahliae (strain VdLs.17 / ATCC MYA-4575 / FGSC 10137) (Verticillium wilt)).